A 182-amino-acid chain; its full sequence is Peptide deformylase (182 aa).

Fe cation-binding residues include C110 and H153. E154 is a catalytic residue. Fe cation is bound at residue H157.

Belongs to the polypeptide deformylase family. Fe(2+) is required as a cofactor.

The enzyme catalyses N-terminal N-formyl-L-methionyl-[peptide] + H2O = N-terminal L-methionyl-[peptide] + formate. In terms of biological role, removes the formyl group from the N-terminal Met of newly synthesized proteins. Requires at least a dipeptide for an efficient rate of reaction. N-terminal L-methionine is a prerequisite for activity but the enzyme has broad specificity at other positions. The sequence is that of Peptide deformylase from Halalkalibacterium halodurans (strain ATCC BAA-125 / DSM 18197 / FERM 7344 / JCM 9153 / C-125) (Bacillus halodurans).